Consider the following 237-residue polypeptide: LexA repressor (237 aa).

A DNA-binding region (H-T-H motif) is located at residues 26-46; that stretch reads FDEMKEALDLRSKSGIHRLIT. The tract at residues 84–110 is disordered; it reads GFSPSVIEGGAQPKPSSRDLAPARSSG. Active-site for autocatalytic cleavage activity residues include S158 and K196.

Belongs to the peptidase S24 family. Homodimer.

It carries out the reaction Hydrolysis of Ala-|-Gly bond in repressor LexA.. Functionally, represses a number of genes involved in the response to DNA damage (SOS response), including recA and lexA. In the presence of single-stranded DNA, RecA interacts with LexA causing an autocatalytic cleavage which disrupts the DNA-binding part of LexA, leading to derepression of the SOS regulon and eventually DNA repair. The polypeptide is LexA repressor (Parvibaculum lavamentivorans (strain DS-1 / DSM 13023 / NCIMB 13966)).